A 319-amino-acid polypeptide reads, in one-letter code: Acetyl-coenzyme A carboxylase carboxyl transferase subunit alpha (319 aa).

Positions 36 to 293 (EVERLKTKLE…HDAFLSELDR (258 aa)) constitute a CoA carboxyltransferase C-terminal domain.

It belongs to the AccA family. As to quaternary structure, acetyl-CoA carboxylase is a heterohexamer composed of biotin carboxyl carrier protein (AccB), biotin carboxylase (AccC) and two subunits each of ACCase subunit alpha (AccA) and ACCase subunit beta (AccD).

The protein resides in the cytoplasm. It carries out the reaction N(6)-carboxybiotinyl-L-lysyl-[protein] + acetyl-CoA = N(6)-biotinyl-L-lysyl-[protein] + malonyl-CoA. It participates in lipid metabolism; malonyl-CoA biosynthesis; malonyl-CoA from acetyl-CoA: step 1/1. Component of the acetyl coenzyme A carboxylase (ACC) complex. First, biotin carboxylase catalyzes the carboxylation of biotin on its carrier protein (BCCP) and then the CO(2) group is transferred by the carboxyltransferase to acetyl-CoA to form malonyl-CoA. The protein is Acetyl-coenzyme A carboxylase carboxyl transferase subunit alpha of Dichelobacter nodosus (strain VCS1703A).